The following is a 365-amino-acid chain: Peptide chain release factor 2 (365 aa).

Position 252 is an N5-methylglutamine (Q252).

It belongs to the prokaryotic/mitochondrial release factor family. Post-translationally, methylated by PrmC. Methylation increases the termination efficiency of RF2.

It localises to the cytoplasm. In terms of biological role, peptide chain release factor 2 directs the termination of translation in response to the peptide chain termination codons UGA and UAA. The sequence is that of Peptide chain release factor 2 from Haemophilus ducreyi (strain 35000HP / ATCC 700724).